Reading from the N-terminus, the 354-residue chain is Uroporphyrinogen decarboxylase (354 aa).

Residues 30–34 (RQAGR), D79, Y154, S209, and H333 each bind substrate.

Belongs to the uroporphyrinogen decarboxylase family. As to quaternary structure, homodimer.

The protein localises to the cytoplasm. The catalysed reaction is uroporphyrinogen III + 4 H(+) = coproporphyrinogen III + 4 CO2. Its pathway is porphyrin-containing compound metabolism; protoporphyrin-IX biosynthesis; coproporphyrinogen-III from 5-aminolevulinate: step 4/4. Catalyzes the decarboxylation of four acetate groups of uroporphyrinogen-III to yield coproporphyrinogen-III. This chain is Uroporphyrinogen decarboxylase, found in Mycolicibacterium vanbaalenii (strain DSM 7251 / JCM 13017 / BCRC 16820 / KCTC 9966 / NRRL B-24157 / PYR-1) (Mycobacterium vanbaalenii).